We begin with the raw amino-acid sequence, 1451 residues long: Transcription elongation factor SPT6 (1451 aa).

A compositionally biased stretch (basic and acidic residues) spans 1–12 (MEETGDSKLVPR). Residues 1 to 217 (MEETGDSKLV…EDDETRQRRI (217 aa)) form a disordered region. Residues 8–12 (KLVPR) carry the Nuclear localization signal motif. A compositionally biased stretch (acidic residues) spans 29-51 (EEEEGEDVFDSSEEDEDIDEDED). The span at 76–85 (SKKRRKHKRR) shows a compositional bias: basic residues. Positions 77-85 (KKRRKHKRR) match the Nuclear localization signal motif. Acidic residues predominate over residues 88-100 (EEDDRLSEDDLDL). Phosphoserine is present on S94. Positions 120 to 125 (KRLKRV) match the Nuclear localization signal motif. Phosphoserine is present on residues S134, S136, S148, and S155. Over residues 153-162 (FFSEDEEEEE) the composition is skewed to acidic residues. A compositionally biased stretch (basic and acidic residues) spans 180–192 (HENRNRTADKGGI). Residues 194 to 211 (DELDDFIEDDEFSDEDDE) are compositionally biased toward acidic residues. Phosphoserine occurs at positions 206 and 295. One can recognise an SH2 domain in the interval 1257–1354 (PYYFPFNGRQ…RLLNEMTSSE (98 aa)).

Belongs to the SPT6 family. In terms of assembly, interacts with CTR9.

The protein resides in the nucleus. Its subcellular location is the chromosome. Functionally, histone H3-H4 chaperone that plays a role in maintenance of chromatin structure during RNA polymerase II transcription elongation thereby repressing transcription initiation from cryptic promoters. Mediates the reassembly of nucleosomes onto the promoters of at least a selected set of genes during repression; the nucleosome reassembly is essential for transcriptional repression. Essential for viability. This chain is Transcription elongation factor SPT6 (SPT6), found in Saccharomyces cerevisiae (strain ATCC 204508 / S288c) (Baker's yeast).